The following is a 778-amino-acid chain: Ribonucleoside-diphosphate reductase large subunit (778 aa).

Residues Ser-177, 192–193 (SC), Gly-221, 419–423 (NLCIE), and 613–617 (PTATS) contribute to the substrate site. Cysteines 193 and 439 form a disulfide. The active-site Proton acceptor is the Asn-419. The active-site Cysteine radical intermediate is Cys-421. Catalysis depends on Glu-423, which acts as the Proton acceptor.

This sequence belongs to the ribonucleoside diphosphate reductase large chain family. Heterotetramer composed of a homodimer of the large subunit (R1) and a homodimer of the small subunit (R2). Larger multisubunit protein complex are also active, composed of (R1)n(R2)n.

The enzyme catalyses a 2'-deoxyribonucleoside 5'-diphosphate + [thioredoxin]-disulfide + H2O = a ribonucleoside 5'-diphosphate + [thioredoxin]-dithiol. Its activity is regulated as follows. Under complex allosteric control mediated by deoxynucleoside triphosphates and ATP binding. The type of nucleotide bound at the specificity site determines substrate preference. It seems probable that ATP makes the enzyme reduce CDP and UDP, dGTP favors ADP reduction and dTTP favors GDP reduction. Its function is as follows. Ribonucleoside-diphosphate reductase holoenzyme provides the precursors necessary for viral DNA synthesis. Allows virus growth in non-dividing cells. Catalyzes the biosynthesis of deoxyribonucleotides from the corresponding ribonucleotides. This is Ribonucleoside-diphosphate reductase large subunit from African swine fever virus (isolate Tick/South Africa/Pretoriuskop Pr4/1996) (ASFV).